Reading from the N-terminus, the 118-residue chain is Basic phospholipase A2 3 (118 aa).

7 disulfides stabilise this stretch: Cys11–Cys71, Cys27–Cys117, Cys29–Cys45, Cys44–Cys98, Cys51–Cys91, Cys60–Cys84, and Cys78–Cys89. Ca(2+) is bound by residues Tyr28, Gly30, and Gly32. The active site involves His48. Ca(2+) is bound at residue Asp49. Asp92 is a catalytic residue.

It belongs to the phospholipase A2 family. Group I subfamily. D49 sub-subfamily. As to quaternary structure, monomer. Ca(2+) is required as a cofactor. Expressed by the venom gland.

The protein localises to the secreted. The enzyme catalyses a 1,2-diacyl-sn-glycero-3-phosphocholine + H2O = a 1-acyl-sn-glycero-3-phosphocholine + a fatty acid + H(+). Functionally, PLA2 catalyzes the calcium-dependent hydrolysis of the 2-acyl groups in 3-sn-phosphoglycerides. This is Basic phospholipase A2 3 from Laticauda semifasciata (Black-banded sea krait).